Here is a 445-residue protein sequence, read N- to C-terminus: UPF0210 protein SZO_15840 (445 aa).

It belongs to the UPF0210 family. Homodimer.

The chain is UPF0210 protein SZO_15840 from Streptococcus equi subsp. zooepidemicus (strain H70).